A 184-amino-acid polypeptide reads, in one-letter code: Large ribosomal subunit protein uL6 (184 aa).

This sequence belongs to the universal ribosomal protein uL6 family. As to quaternary structure, part of the 50S ribosomal subunit.

In terms of biological role, this protein binds to the 23S rRNA, and is important in its secondary structure. It is located near the subunit interface in the base of the L7/L12 stalk, and near the tRNA binding site of the peptidyltransferase center. The protein is Large ribosomal subunit protein uL6 of Thermotoga neapolitana (strain ATCC 49049 / DSM 4359 / NBRC 107923 / NS-E).